A 112-amino-acid polypeptide reads, in one-letter code: Transmembrane protein 14 homolog (112 aa).

A helical transmembrane segment spans residues 3–23 (VDWFGYVYAATVAAGGIMGYA).

Belongs to the TMEM14 family.

The protein resides in the membrane. This chain is Transmembrane protein 14 homolog, found in Drosophila melanogaster (Fruit fly).